The chain runs to 375 residues: tRNA-specific 2-thiouridylase MnmA (375 aa).

Residues 12 to 19 (GMSGGVDS) and Met-38 each bind ATP. Residues 98–100 (NPD) form an interaction with target base in tRNA region. Cys-103 acts as the Nucleophile in catalysis. Residues Cys-103 and Cys-200 are joined by a disulfide bond. Position 127 (Gly-127) interacts with ATP. The interaction with tRNA stretch occupies residues 150–152 (KDQ). The active-site Cysteine persulfide intermediate is the Cys-200. Residues 312–313 (RY) are interaction with tRNA.

Belongs to the MnmA/TRMU family.

It localises to the cytoplasm. It catalyses the reaction S-sulfanyl-L-cysteinyl-[protein] + uridine(34) in tRNA + AH2 + ATP = 2-thiouridine(34) in tRNA + L-cysteinyl-[protein] + A + AMP + diphosphate + H(+). Its function is as follows. Catalyzes the 2-thiolation of uridine at the wobble position (U34) of tRNA, leading to the formation of s(2)U34. In Lactobacillus delbrueckii subsp. bulgaricus (strain ATCC BAA-365 / Lb-18), this protein is tRNA-specific 2-thiouridylase MnmA.